Here is a 520-residue protein sequence, read N- to C-terminus: Mitogen-activated protein kinase kinase 3 (520 aa).

Position 69 is a phosphoserine (Ser-69). The Protein kinase domain occupies 83–339 (MRVFGAIGSG…ADQLLSHPFI (257 aa)). Residues 89–97 (IGSGASSVV) and Lys-112 contribute to the ATP site. Asp-207 serves as the catalytic Proton acceptor. Ser-235 carries the post-translational modification Phosphoserine. Thr-241 and Thr-245 each carry phosphothreonine. Residues 366–516 (LADMLTIHYY…YFLAKQELYI (151 aa)) form the NTF2 domain.

The protein belongs to the protein kinase superfamily. STE Ser/Thr protein kinase family. MAP kinase kinase subfamily. In terms of assembly, interacts with MPK1, MPK2 and MPK7. Interacts with P.syringae type III effector HopF2. Interacts with MPK14. Binds to MAPKKK17 and MAPKKK18. Binds to MAPKKK20. In terms of processing, phosphorylation at Ser-235 and Thr-241 by MAP kinase kinase kinases positively regulates kinase activity. Phosphorylated by MAPKKK20. As to expression, mostly expressed in leaves, and, to a lower extent, in roots, seedlings, flower buds, flowers and siliques.

It is found in the nucleus. Its subcellular location is the cytoplasm. The enzyme catalyses L-seryl-[protein] + ATP = O-phospho-L-seryl-[protein] + ADP + H(+). The catalysed reaction is L-threonyl-[protein] + ATP = O-phospho-L-threonyl-[protein] + ADP + H(+). It catalyses the reaction L-tyrosyl-[protein] + ATP = O-phospho-L-tyrosyl-[protein] + ADP + H(+). In terms of biological role, MKK3-MPK6 module plays an important role in the jasmonate signal transduction pathway through the negative regulation of MYC2/JIN1 expression. Activates by phosphorylation the downstream MPK6, MPK7 and MPK8. MKK3-MPK7 module acts as a positive regulator of PR1 gene expression. MKK3-MPK8 module negatively regulates ROS accumulation through controlling expression of the RBOHD gene. Component of the abscisic acid (ABA) signaling pathway that may act as ABA signal transducer in the context of abiotic stresses. Activator of the C group MAP kinases. Activates MPK7 in response to ABA. Mitogen-activated protein kinase (MAPK) that is specifically regulated by MAPKKK20 and mediates signaling that regulates cortical microtubule functions. This is Mitogen-activated protein kinase kinase 3 from Arabidopsis thaliana (Mouse-ear cress).